Here is a 244-residue protein sequence, read N- to C-terminus: MRRMAKYDRSYSMQDAHGPNGLARRGTQRGCSRSKSTRRGNLGTIASLTFSQKQALNLSWRLLKPQASACFRKIFLELEIASPKVKQIFYKAALVDAFNKDDDNTATLEVHIKLTTKFFDELLATLDDENEFVAKIRGIGSAHAILAKGSNFSSDIWERLGEIAMERVCSHEVVTKTREASRAWRTLIAILIDELRGGFEGELRQHRKSSSTDQIEMGKVEDEEELHSKLQQLRMDYNQTLPYT.

Residues 1–38 (MRRMAKYDRSYSMQDAHGPNGLARRGTQRGCSRSKSTR) form a disordered region. The 154-residue stretch at 47-200 (SLTFSQKQAL…LIDELRGGFE (154 aa)) folds into the Globin domain. Residues His-111 and His-143 each coordinate heme.

It belongs to the globin family.

The sequence is that of Globin-like protein 9 from Caenorhabditis briggsae.